The primary structure comprises 603 residues: Coiled-coil domain-containing protein 148 (603 aa).

Coiled-coil stretches lie at residues 365–429 (LAKD…KKKK) and 461–510 (EQSL…KQVA).

This Macaca fascicularis (Crab-eating macaque) protein is Coiled-coil domain-containing protein 148 (CCDC148).